The primary structure comprises 212 residues: Probable octanoyltransferase (212 aa).

The BPL/LPL catalytic domain occupies 28–199; the sequence is GVSEEMILVT…NLETLLQRQE (172 aa). Substrate contacts are provided by residues 66 to 73, 130 to 132, and 143 to 145; these read RGGDATYH, SVG, and GVA. The Acyl-thioester intermediate role is filled by cysteine 161.

Belongs to the LipB family.

Its subcellular location is the cytoplasm. It carries out the reaction octanoyl-[ACP] + L-lysyl-[protein] = N(6)-octanoyl-L-lysyl-[protein] + holo-[ACP] + H(+). The protein operates within protein modification; protein lipoylation via endogenous pathway; protein N(6)-(lipoyl)lysine from octanoyl-[acyl-carrier-protein]: step 1/2. In terms of biological role, catalyzes the transfer of endogenously produced octanoic acid from octanoyl-acyl-carrier-protein onto the lipoyl domains of lipoate-dependent enzymes. Lipoyl-ACP can also act as a substrate although octanoyl-ACP is likely to be the physiological substrate. This chain is Probable octanoyltransferase, found in Pyrobaculum arsenaticum (strain DSM 13514 / JCM 11321 / PZ6).